We begin with the raw amino-acid sequence, 166 residues long: NADH-quinone oxidoreductase subunit I (166 aa).

2 consecutive 4Fe-4S ferredoxin-type domains span residues 57-87 (LRRY…IESE) and 97-126 (TRYD…VTPI). The [4Fe-4S] cluster site is built by Cys67, Cys70, Cys73, Cys77, Cys106, Cys109, Cys112, and Cys116.

Belongs to the complex I 23 kDa subunit family. NDH-1 is composed of 14 different subunits. Subunits NuoA, H, J, K, L, M, N constitute the membrane sector of the complex. The cofactor is [4Fe-4S] cluster.

It is found in the cell inner membrane. The catalysed reaction is a quinone + NADH + 5 H(+)(in) = a quinol + NAD(+) + 4 H(+)(out). NDH-1 shuttles electrons from NADH, via FMN and iron-sulfur (Fe-S) centers, to quinones in the respiratory chain. The immediate electron acceptor for the enzyme in this species is believed to be ubiquinone. Couples the redox reaction to proton translocation (for every two electrons transferred, four hydrogen ions are translocated across the cytoplasmic membrane), and thus conserves the redox energy in a proton gradient. The sequence is that of NADH-quinone oxidoreductase subunit I from Legionella pneumophila (strain Paris).